Here is a 710-residue protein sequence, read N- to C-terminus: PC3-like endoprotease variant B (710 aa).

The N-terminal stretch at 1–29 is a signal peptide; sequence MNYRGIYRRRYVFVLLLLVAVVNISYGWT. Residues N23, N62, and N190 are each glycosylated (N-linked (GlcNAc...) asparagine). The propeptide occupies 30–152; that stretch reads VLKNKDYKRR…QQKILERVKR (123 aa). The 323-residue stretch at 164 to 486 folds into the Peptidase S8 domain; the sequence is MWYLLNTGQA…FGRLDANAMV (323 aa). Residues D202 and H242 each act as charge relay system in the active site. Intrachain disulfides connect C259-C411 and C351-C381. Catalysis depends on S419, which acts as the Charge relay system. A P/Homo B domain is found at 495–638; sequence LPAQRKCTAA…EERVIDTQTK (144 aa). C501 and C527 form a disulfide bridge. Residues 668-710 are disordered; sequence TIEGSTQDHVKPKEGAKEPWGNYRNTNNINNNSSTAFKRKKKQ. Positions 673–684 are enriched in basic and acidic residues; that stretch reads TQDHVKPKEGAK. Positions 689–699 are enriched in low complexity; sequence NYRNTNNINNN. N-linked (GlcNAc...) asparagine glycosylation is found at N698 and N699.

Belongs to the peptidase S8 family. Furin subfamily. Predominantly in the body column.

In terms of biological role, probably involved in the processing of hormone and other protein precursors at sites comprised of pairs of basic amino acid residues. The chain is PC3-like endoprotease variant B from Hydra vulgaris (Hydra).